The sequence spans 361 residues: Peptide chain release factor 1 (361 aa).

An N5-methylglutamine modification is found at Gln237. The interval 286–306 (AKQDQEQAAKRKSLVGSGDRS) is disordered.

It belongs to the prokaryotic/mitochondrial release factor family. In terms of processing, methylated by PrmC. Methylation increases the termination efficiency of RF1.

Its subcellular location is the cytoplasm. In terms of biological role, peptide chain release factor 1 directs the termination of translation in response to the peptide chain termination codons UAG and UAA. The protein is Peptide chain release factor 1 of Coxiella burnetii (strain CbuK_Q154) (Coxiella burnetii (strain Q154)).